The primary structure comprises 358 residues: Histamine H2 receptor (358 aa).

The Extracellular portion of the chain corresponds to 1–22 (MEPNGTVHSCCLDSMALKVTIS). N-linked (GlcNAc...) asparagine glycosylation occurs at N4. Residues 23–44 (VVLTTLILITIAGNVVVCLAVS) traverse the membrane as a helical segment. The Cytoplasmic portion of the chain corresponds to 45–57 (LNRRLRSLTNCFI). A helical transmembrane segment spans residues 58–81 (VSLAATDLLLGLLVLPFSAIYQLS). Topologically, residues 82 to 92 (FTWSFGHVFCN) are extracellular. C91 and C173 form a disulfide bridge. A helical transmembrane segment spans residues 93–114 (IYTSLDVMLCTASILNLFMISL). The Cytoplasmic segment spans residues 115–134 (DRYCAVTDPLRYPVLVTPVR). The chain crosses the membrane as a helical span at residues 135-159 (VAISLVFIWVISITLSFLSIHLGWN). The Extracellular portion of the chain corresponds to 160 to 179 (SRNGTRGGNDTFKCKVQVNE). The helical transmembrane segment at 180–203 (VYGLVDGLVTFYLPLLIMCVTYYR) threads the bilayer. Residues 204–233 (IFKIAREQAKRINHISSWKAATIREHKATV) are Cytoplasmic-facing. Residues 234-257 (TLAAVMGAFIICWFPYFTAFVYRG) form a helical membrane-spanning segment. The Extracellular segment spans residues 258 to 266 (LRGDDAINE). Residues 267–288 (AVEGIVLWLGYANSALNPILYA) traverse the membrane as a helical segment. The Cytoplasmic portion of the chain corresponds to 289-358 (ALNRDFRTAY…LTHPQGNPIR (70 aa)). A lipid anchor (S-palmitoyl cysteine) is attached at C304.

It belongs to the G-protein coupled receptor 1 family.

It is found in the cell membrane. Functionally, the H2 subclass of histamine receptors mediates gastric acid secretion. The activity of this receptor is mediated by G proteins which activate adenylyl cyclase. In Rattus norvegicus (Rat), this protein is Histamine H2 receptor (Hrh2).